The chain runs to 291 residues: Probable protein S-acyltransferase 12 (291 aa).

A run of 2 helical transmembrane segments spans residues 14 to 34 and 49 to 69; these read GYFMILLVVAVVGVSYYAVVV and LSALAALIIFVFHFLLIMLLW. In terms of domain architecture, DHHC spans 111-161; sequence GYCTKCRNVKPPRCHHCSVCQRCVLKMDHHCVWIVNCVGARNYKFFLLFLF. The active-site S-palmitoyl cysteine intermediate is the Cys-141. Transmembrane regions (helical) follow at residues 155–175 and 198–218; these read FFLLFLFYTFLETMLDVIVLL and LVLAFVLNFAFVLSLLCFVVM.

Belongs to the DHHC palmitoyltransferase family.

Its subcellular location is the cell membrane. The enzyme catalyses L-cysteinyl-[protein] + hexadecanoyl-CoA = S-hexadecanoyl-L-cysteinyl-[protein] + CoA. In terms of biological role, palmitoyl acyltransferase. The protein is Probable protein S-acyltransferase 12 (PAT12) of Arabidopsis thaliana (Mouse-ear cress).